The sequence spans 421 residues: C4-dicarboxylate transport protein (421 aa).

Helical transmembrane passes span 9–29 (VQVI…PDVG), 39–59 (FINA…VLGI), 76–96 (FIYF…VVNI), 145–165 (GDIL…AALG), 185–205 (IIGY…AYTI), 219–239 (LMMS…NIIC), 316–336 (VFGV…LMLT), and 348–368 (FIVL…GLAL).

It belongs to the dicarboxylate/amino acid:cation symporter (DAACS) (TC 2.A.23) family.

The protein resides in the cell membrane. Functionally, responsible for the transport of succinate and fumarate, but not malate, across the membrane. This Bacillus subtilis (strain 168) protein is C4-dicarboxylate transport protein (dctA).